Reading from the N-terminus, the 111-residue chain is DIVLTQSPASLAVSLGQRATISCKASQSVDYTGESYMNWYQQNPGQSPKLLIYAASNLESGIPARFSGSGSGTDFTLNIHPVEEEDAATYYCQQSNEDPYTFGGGTKLEIK.

Residues 1–23 form a framework-1 region; it reads DIVLTQSPASLAVSLGQRATISC. An intrachain disulfide couples Cys23 to Cys92. The interval 24–38 is complementarity-determining-1; it reads KASQSVDYTGESYMN. Positions 39 to 53 are framework-2; the sequence is WYQQNPGQSPKLLIY. The tract at residues 54 to 60 is complementarity-determining-2; sequence AASNLES. Residues 61-92 form a framework-3 region; it reads GIPARFSGSGSGTDFTLNIHPVEEEDAATYYC. The segment at 93 to 101 is complementarity-determining-3; sequence QQSNEDPYT. Residues 102–111 form a framework-4 region; the sequence is FGGGTKLEIK.

This Mus musculus (Mouse) protein is Ig kappa chain V-III region CBPC 101.